A 372-amino-acid chain; its full sequence is Cytochrome b (372 aa).

4 helical membrane passes run 32–52 (LGFNLGVMIALQILVGICLSW), 77–99 (FIIRSLHIIFTSLLYFLLYIHII), 114–134 (VWFFGFLIFIFILIIAFIGYT), and 180–200 (LHSIHIFLPFVLLFLIGAHFF). His-83 and His-97 together coordinate heme b. Residues His-184 and His-198 each coordinate heme b. Position 203 (His-203) interacts with a ubiquinone. Transmembrane regions (helical) follow at residues 228–248 (YYLRDLFLIINILCFLIYYIC), 297–317 (LLFVLCFALFLFILNCILIFI), 330–350 (LVLFYYLCVGGFLSLYVVLCF), and 351–371 (PLWMEIQFWVLLLFCFIVCRL).

The protein belongs to the cytochrome b family. The main subunits of complex b-c1 are: cytochrome b, cytochrome c1 and the Rieske protein. Requires heme b as cofactor.

The protein localises to the mitochondrion inner membrane. Its function is as follows. Component of the ubiquinol-cytochrome c reductase complex (complex III or cytochrome b-c1 complex) that is part of the mitochondrial respiratory chain. The b-c1 complex mediates electron transfer from ubiquinol to cytochrome c. Contributes to the generation of a proton gradient across the mitochondrial membrane that is then used for ATP synthesis. This is Cytochrome b (MT-CYB) from Trypanoplasma borreli.